The following is a 201-amino-acid chain: MPAIESGLWALILTGVLGYLLGSIPFGIVITRALGLGDLRKIGSGNIGATNVLRTGNKPAALATLLLDSGKGAIAVLIARAAVGEDAAQLAAFTSFLGHLFPVWLGFRGGKGVATFLGTLLALAWPVGLACCLTWLATAALGRISSLSALVAAASGVLWMILLGYGQMAALGAVLAVLIFIRHHANIRRILAGTEPRIGKK.

Helical transmembrane passes span 10–30 (ALIL…GIVI), 59–79 (PAAL…VLIA), 87–107 (AAQL…WLGF), 116–136 (FLGT…LTWL), and 161–181 (ILLG…LIFI).

Belongs to the PlsY family. In terms of assembly, probably interacts with PlsX.

It localises to the cell inner membrane. It catalyses the reaction an acyl phosphate + sn-glycerol 3-phosphate = a 1-acyl-sn-glycero-3-phosphate + phosphate. Its pathway is lipid metabolism; phospholipid metabolism. Functionally, catalyzes the transfer of an acyl group from acyl-phosphate (acyl-PO(4)) to glycerol-3-phosphate (G3P) to form lysophosphatidic acid (LPA). This enzyme utilizes acyl-phosphate as fatty acyl donor, but not acyl-CoA or acyl-ACP. The chain is Glycerol-3-phosphate acyltransferase from Cereibacter sphaeroides (strain ATCC 17029 / ATH 2.4.9) (Rhodobacter sphaeroides).